The sequence spans 502 residues: uncharacterized protein (502 aa).

Residues 1-21 (MKIFLVILSVFFFNGCFGLAY) traverse the membrane as a helical segment. PLD phosphodiesterase domains lie at 162–189 (IKKRMHNKLFIVDNFAVIIGGRNIGDNY) and 396–423 (TKHSLHGKTIVFDDALTLLGSFNIDPRS).

The protein belongs to the phospholipase D family. Cardiolipin synthase subfamily.

It localises to the cell membrane. This is an uncharacterized protein from Helicobacter pylori (strain J99 / ATCC 700824) (Campylobacter pylori J99).